A 525-amino-acid polypeptide reads, in one-letter code: FNIP repeat-containing protein DDB_G0274617 (525 aa).

An FNIP repeat occupies 65 to 107 (YQHEIKKEMLPSSIISIIFYNIKNILSSDSIPDTVKFLGFNGY).

The protein is FNIP repeat-containing protein DDB_G0274617 of Dictyostelium discoideum (Social amoeba).